Reading from the N-terminus, the 98-residue chain is MALTKAEMSEHLFEKLGLSKRDAKDLVELFFEEIRRALENGEQVKLSGFGNFDLRDKNQRPGRNPKTGEDIPITARRVVTFRPGQKLKCRVENATPKD.

Positions Phe49–Ile71 are disordered.

This sequence belongs to the bacterial histone-like protein family. As to quaternary structure, heterodimer of an alpha and a beta chain.

This protein is one of the two subunits of integration host factor, a specific DNA-binding protein that functions in genetic recombination as well as in transcriptional and translational control. The polypeptide is Integration host factor subunit alpha (Edwardsiella ictaluri (strain 93-146)).